The sequence spans 236 residues: Large ribosomal subunit protein uL1 (236 aa).

This sequence belongs to the universal ribosomal protein uL1 family. Part of the 50S ribosomal subunit.

Its function is as follows. Binds directly to 23S rRNA. The L1 stalk is quite mobile in the ribosome, and is involved in E site tRNA release. In terms of biological role, protein L1 is also a translational repressor protein, it controls the translation of the L11 operon by binding to its mRNA. This Sorangium cellulosum (strain So ce56) (Polyangium cellulosum (strain So ce56)) protein is Large ribosomal subunit protein uL1.